We begin with the raw amino-acid sequence, 386 residues long: Succinyl-diaminopimelate desuccinylase (386 aa).

His-76 contributes to the Zn(2+) binding site. Asp-78 is a catalytic residue. Zn(2+) is bound at residue Asp-110. The active-site Proton acceptor is Glu-144. Residues Glu-145, Glu-173, and His-359 each coordinate Zn(2+).

This sequence belongs to the peptidase M20A family. DapE subfamily. As to quaternary structure, homodimer. The cofactor is Zn(2+). Co(2+) serves as cofactor.

It catalyses the reaction N-succinyl-(2S,6S)-2,6-diaminopimelate + H2O = (2S,6S)-2,6-diaminopimelate + succinate. The protein operates within amino-acid biosynthesis; L-lysine biosynthesis via DAP pathway; LL-2,6-diaminopimelate from (S)-tetrahydrodipicolinate (succinylase route): step 3/3. Functionally, catalyzes the hydrolysis of N-succinyl-L,L-diaminopimelic acid (SDAP), forming succinate and LL-2,6-diaminopimelate (DAP), an intermediate involved in the bacterial biosynthesis of lysine and meso-diaminopimelic acid, an essential component of bacterial cell walls. The protein is Succinyl-diaminopimelate desuccinylase of Chromohalobacter salexigens (strain ATCC BAA-138 / DSM 3043 / CIP 106854 / NCIMB 13768 / 1H11).